Here is a 935-residue protein sequence, read N- to C-terminus: ABC transporter A family member 7 (935 aa).

7 consecutive transmembrane segments (helical) span residues 34-54 (LIMIPFYLCILLVIIQILFDT), 338-358 (IASLIGPLFFTWVILLLFPVI), 392-412 (FLTISVLYVICLMIFGSAIGL), 424-444 (FVFYFLYLNLQIALAFLVSSV), 454-474 (ASYIYVFGSGLLGLFLLNFLI), 483-503 (WIIVMELYPGFSLYRGLYELA), and 528-548 (DDVFYIIVVEWFLALIAAYYI). The disordered stretch occupies residues 571 to 591 (SLRRPSLQRQGSKVSVDMEKP). The ABC transporter domain occupies 613 to 850 (IVCDNLKKVY…YGGSYVFTMT (238 aa)). An ATP-binding site is contributed by 651 to 658 (GPNGAGKT).

The protein belongs to the ABC transporter superfamily. ABCA family. CPR flippase (TC 3.A.1.211) subfamily.

It localises to the membrane. The sequence is that of ABC transporter A family member 7 (ABCA7) from Arabidopsis thaliana (Mouse-ear cress).